The chain runs to 308 residues: Inactive C-alpha-formylglycine-generating enzyme 2 (308 aa).

The N-terminal stretch at 1–33 is a signal peptide; it reads MRSEFWFPSMGSLLPPVLLLWLLSCPRLQLGHA. Residues Cys-163 and Cys-297 are joined by a disulfide bond. N-linked (GlcNAc...) asparagine glycosylation occurs at Asn-198. Positions 201, 202, 215, 217, 236, 239, 241, and 243 each coordinate Ca(2+). The span at 281 to 291 shows a compositional bias: polar residues; the sequence is RMGNTPDSASD. The tract at residues 281–308 is disordered; the sequence is RMGNTPDSASDNLGFRCASSAGRPKEDL. The short motif at 305–308 is the Non-canonical ER retention motif element; it reads KEDL.

This sequence belongs to the sulfatase-modifying factor family. In terms of assembly, homodimer and heterodimer with SUMF1.

The protein localises to the endoplasmic reticulum lumen. In terms of biological role, lacks formylglycine generating activity and is unable to convert newly synthesized inactive sulfatases to their active form. Inhibits the activation of sulfatases by SUMF1. In Mus musculus (Mouse), this protein is Inactive C-alpha-formylglycine-generating enzyme 2.